A 112-amino-acid chain; its full sequence is uncharacterized protein (112 aa).

It to Buchnera BUsg564.

This is an uncharacterized protein from Buchnera aphidicola subsp. Acyrthosiphon pisum (strain APS) (Acyrthosiphon pisum symbiotic bacterium).